Reading from the N-terminus, the 155-residue chain is MNATHCILALQLFLMAVSGCYCHGTVIESLESLNNYFNSSGIDVEEKSLFLDIWRNWQKDGDMKILQSQIISFYLRLFEVLKDNQAISNNISVIESHLITTFFSNSKAKKDAFMSIAKFEVNNPQVQRQAFNELIRVVHQLLPESSLRKRKRSRC.

The N-terminal stretch at 1–22 (MNATHCILALQLFLMAVSGCYC) is a signal peptide. Asn-38 and Asn-90 each carry an N-linked (GlcNAc...) asparagine glycan.

It belongs to the type II (or gamma) interferon family. In terms of assembly, homodimer. Interacts with IFNGR1 (via extracellular domain); this interaction promotes IFNGR1 dimerization. Released primarily from activated T lymphocytes.

Its subcellular location is the secreted. Functionally, type II interferon produced by immune cells such as T-cells and NK cells that plays crucial roles in antimicrobial, antiviral, and antitumor responses by activating effector immune cells and enhancing antigen presentation. Primarily signals through the JAK-STAT pathway after interaction with its receptor IFNGR1 to affect gene regulation. Upon IFNG binding, IFNGR1 intracellular domain opens out to allow association of downstream signaling components JAK2, JAK1 and STAT1, leading to STAT1 activation, nuclear translocation and transcription of IFNG-regulated genes. Many of the induced genes are transcription factors such as IRF1 that are able to further drive regulation of a next wave of transcription. Plays a role in class I antigen presentation pathway by inducing a replacement of catalytic proteasome subunits with immunoproteasome subunits. In turn, increases the quantity, quality, and repertoire of peptides for class I MHC loading. Increases the efficiency of peptide generation also by inducing the expression of activator PA28 that associates with the proteasome and alters its proteolytic cleavage preference. Up-regulates as well MHC II complexes on the cell surface by promoting expression of several key molecules such as cathepsins B/CTSB, H/CTSH, and L/CTSL. Participates in the regulation of hematopoietic stem cells during development and under homeostatic conditions by affecting their development, quiescence, and differentiation. This chain is Interferon gamma (Ifng), found in Mus musculus (Mouse).